Here is a 738-residue protein sequence, read N- to C-terminus: Propionyl-CoA carboxylase alpha chain, mitochondrial (738 aa).

The 448-residue stretch at 62–509 folds into the Biotin carboxylation domain; that stretch reads KFDKILIANR…TTKYLPEVYP (448 aa). ATP-binding positions include lysine 177, 209-270, glutamate 261, and asparagine 296; that span reads SREI…PRHI. One can recognise an ATP-grasp domain in the interval 181–378; the sequence is KKIATAARVS…IVQQMLRVAY (198 aa). Residues glutamate 336, glutamate 349, and asparagine 351 each contribute to the Mg(2+) site. Glutamate 336, glutamate 349, and asparagine 351 together coordinate Mn(2+). Residue arginine 353 is part of the active site. Phenylalanine 409 contributes to the biotin binding site. Residues 663–738 enclose the Biotinyl-binding domain; sequence KAKVDLSTVV…DEGEVLVELE (76 aa). Lysine 704 carries the N6-biotinyllysine modification.

The holoenzyme is a dodecamer composed of 6 alpha subunits and 6 beta subunits. Interacts with sir-2.2. The cofactor is biotin. Mg(2+) serves as cofactor. It depends on Mn(2+) as a cofactor. In terms of processing, the biotin cofactor is covalently attached to the C-terminal biotinyl-binding domain and is required for the catalytic activity.

The protein localises to the mitochondrion matrix. The catalysed reaction is propanoyl-CoA + hydrogencarbonate + ATP = (S)-methylmalonyl-CoA + ADP + phosphate + H(+). The enzyme catalyses butanoyl-CoA + hydrogencarbonate + ATP = (2S)-ethylmalonyl-CoA + ADP + phosphate + H(+). It functions in the pathway metabolic intermediate metabolism; propanoyl-CoA degradation; succinyl-CoA from propanoyl-CoA: step 1/3. In terms of biological role, this is one of the 2 subunits of the biotin-dependent propionyl-CoA carboxylase (PCC), a mitochondrial enzyme involved in the catabolism of odd chain fatty acids, branched-chain amino acids isoleucine, threonine, methionine, and valine and other metabolites. Propionyl-CoA carboxylase catalyzes the carboxylation of propionyl-CoA/propanoyl-CoA to D-methylmalonyl-CoA/(S)-methylmalonyl-CoA. Within the holoenzyme, the alpha subunit catalyzes the ATP-dependent carboxylation of the biotin carried by the biotin carboxyl carrier (BCC) domain, while the beta subunit then transfers the carboxyl group from carboxylated biotin to propionyl-CoA. Propionyl-CoA carboxylase also significantly acts on butyryl-CoA/butanoyl-CoA, which is converted to ethylmalonyl-CoA/(2S)-ethylmalonyl-CoA. Other alternative minor substrates include (2E)-butenoyl-CoA/crotonoyl-CoA. This Caenorhabditis briggsae protein is Propionyl-CoA carboxylase alpha chain, mitochondrial (pcca-1).